We begin with the raw amino-acid sequence, 32 residues long: Potassium channel toxin alpha-KTx 9.4 (32 aa).

3 disulfides stabilise this stretch: Cys3-Cys19, Cys6-Cys24, and Cys10-Cys26.

In terms of tissue distribution, expressed by the venom gland.

It localises to the secreted. Blocker of human voltage-gated potassium channel Kv1.1/KCNA1. The chain is Potassium channel toxin alpha-KTx 9.4 from Hottentotta tamulus (Eastern Indian scorpion).